A 119-amino-acid polypeptide reads, in one-letter code: Putative F-box protein At2g39415 (119 aa).

The 56-residue stretch at 37–92 (IDSISSLPDVILQQILSSLPTNLAIRTSVLSTRWRHVWSDTPYIYFDGPGTLYRGL) folds into the F-box domain.

The sequence is that of Putative F-box protein At2g39415 from Arabidopsis thaliana (Mouse-ear cress).